The chain runs to 204 residues: Large ribosomal subunit protein uL4 (204 aa).

The segment at 49-90 is disordered; it reads KVKGMGEVSGTTKKPYRQKGTGSARQGSLRAPQYRTGGAVHG.

The protein belongs to the universal ribosomal protein uL4 family. In terms of assembly, part of the 50S ribosomal subunit.

Its function is as follows. One of the primary rRNA binding proteins, this protein initially binds near the 5'-end of the 23S rRNA. It is important during the early stages of 50S assembly. It makes multiple contacts with different domains of the 23S rRNA in the assembled 50S subunit and ribosome. Functionally, forms part of the polypeptide exit tunnel. The sequence is that of Large ribosomal subunit protein uL4 from Gluconacetobacter diazotrophicus (strain ATCC 49037 / DSM 5601 / CCUG 37298 / CIP 103539 / LMG 7603 / PAl5).